Reading from the N-terminus, the 409-residue chain is Phosphatidylglycerol--prolipoprotein diacylglyceryl transferase (409 aa).

Helical transmembrane passes span 18–38 (PVPL…AVFV), 48–68 (MDPM…IVGA), 93–113 (IWNG…GAWL), and 119–139 (GISL…AQAI). An a 1,2-diacyl-sn-glycero-3-phospho-(1'-sn-glycerol)-binding site is contributed by Arg141. The next 2 membrane-spanning stretches (helical) occupy residues 177–197 (QPTF…LLVV) and 234–254 (ILGL…ALLA). Residues 273–409 (ALGIARSRPA…AVPPEEPQLP (137 aa)) are disordered. Low complexity-rich tracts occupy residues 297–309 (AAAP…DSAA), 320–335 (PDLG…SAGS), and 348–375 (TATT…TATT).

It belongs to the Lgt family.

The protein resides in the cell membrane. The enzyme catalyses L-cysteinyl-[prolipoprotein] + a 1,2-diacyl-sn-glycero-3-phospho-(1'-sn-glycerol) = an S-1,2-diacyl-sn-glyceryl-L-cysteinyl-[prolipoprotein] + sn-glycerol 1-phosphate + H(+). It participates in protein modification; lipoprotein biosynthesis (diacylglyceryl transfer). Functionally, catalyzes the transfer of the diacylglyceryl group from phosphatidylglycerol to the sulfhydryl group of the N-terminal cysteine of a prolipoprotein, the first step in the formation of mature lipoproteins. The protein is Phosphatidylglycerol--prolipoprotein diacylglyceryl transferase of Frankia casuarinae (strain DSM 45818 / CECT 9043 / HFP020203 / CcI3).